Reading from the N-terminus, the 225-residue chain is Putative adhesin RT0816 (225 aa).

A signal peptide spans 1–22 (MKKLLLIAATSATILSSSISFA).

In Rickettsia typhi (strain ATCC VR-144 / Wilmington), this protein is Putative adhesin RT0816.